The sequence spans 323 residues: Methionyl-tRNA formyltransferase (323 aa).

115–118 is a (6S)-5,6,7,8-tetrahydrofolate binding site; that stretch reads SLLP.

The protein belongs to the Fmt family.

The enzyme catalyses L-methionyl-tRNA(fMet) + (6R)-10-formyltetrahydrofolate = N-formyl-L-methionyl-tRNA(fMet) + (6S)-5,6,7,8-tetrahydrofolate + H(+). Functionally, attaches a formyl group to the free amino group of methionyl-tRNA(fMet). The formyl group appears to play a dual role in the initiator identity of N-formylmethionyl-tRNA by promoting its recognition by IF2 and preventing the misappropriation of this tRNA by the elongation apparatus. The sequence is that of Methionyl-tRNA formyltransferase from Lactococcus lactis subsp. cremoris (strain MG1363).